Reading from the N-terminus, the 105-residue chain is Large ribosomal subunit protein eL33 (105 aa).

This sequence belongs to the eukaryotic ribosomal protein eL33 family.

Its function is as follows. The protein was found to bind to both initiator and elongator tRNAs and consequently was assigned to the P site or P and A site. This chain is Large ribosomal subunit protein eL33 (rpl35a), found in Dictyostelium discoideum (Social amoeba).